We begin with the raw amino-acid sequence, 631 residues long: ATP-dependent DNA helicase 2 subunit 1 (631 aa).

A Ku domain is found at 262–487 (FYLGPNLSMS…VEFFQKIIKK (226 aa)). The disordered stretch occupies residues 550–570 (AEPHKKRAAKSTTAGASGPKM).

This sequence belongs to the ku70 family. In terms of assembly, heterodimer of a 70 kDa and a 80 kDa subunit.

Its subcellular location is the nucleus. It localises to the chromosome. It carries out the reaction ATP + H2O = ADP + phosphate + H(+). Functionally, single-stranded DNA-dependent ATP-dependent helicase. Involved in non-homologous end joining (NHEJ) DNA double strand break repair. Sequence-specific DNA-binding protein that has a high affinity for a 31 bp sequence in the Yp1 gene. Site-specific DNA binding to 31 bp P element inverted repeats. The polypeptide is ATP-dependent DNA helicase 2 subunit 1 (Irbp) (Drosophila melanogaster (Fruit fly)).